The chain runs to 622 residues: Elongation factor 4 (622 aa).

In terms of domain architecture, tr-type G spans 17–201 (ALIRNFCIIA…KVVAEVPAPV (185 aa)). Residues 29-34 (DHGKST) and 148-151 (NKID) contribute to the GTP site.

It belongs to the TRAFAC class translation factor GTPase superfamily. Classic translation factor GTPase family. LepA subfamily.

Its subcellular location is the cell membrane. The catalysed reaction is GTP + H2O = GDP + phosphate + H(+). Its function is as follows. Required for accurate and efficient protein synthesis under certain stress conditions. May act as a fidelity factor of the translation reaction, by catalyzing a one-codon backward translocation of tRNAs on improperly translocated ribosomes. Back-translocation proceeds from a post-translocation (POST) complex to a pre-translocation (PRE) complex, thus giving elongation factor G a second chance to translocate the tRNAs correctly. Binds to ribosomes in a GTP-dependent manner. This Streptomyces avermitilis (strain ATCC 31267 / DSM 46492 / JCM 5070 / NBRC 14893 / NCIMB 12804 / NRRL 8165 / MA-4680) protein is Elongation factor 4.